The chain runs to 451 residues: D-aminoacyl-tRNA deacylase (451 aa).

The disordered stretch occupies residues 410 to 437 (RTADIPEGPKFGKLASGESVEIDGEEID).

Belongs to the DtdA deacylase family. Monomer. The cofactor is Zn(2+).

The catalysed reaction is a D-aminoacyl-tRNA + H2O = a tRNA + a D-alpha-amino acid + H(+). It carries out the reaction glycyl-tRNA(Ala) + H2O = tRNA(Ala) + glycine + H(+). Its function is as follows. D-aminoacyl-tRNA deacylase with broad substrate specificity. By recycling D-aminoacyl-tRNA to D-amino acids and free tRNA molecules, this enzyme counteracts the toxicity associated with the formation of D-aminoacyl-tRNA entities in vivo. This is D-aminoacyl-tRNA deacylase from Haloarcula marismortui (strain ATCC 43049 / DSM 3752 / JCM 8966 / VKM B-1809) (Halobacterium marismortui).